The primary structure comprises 483 residues: Trehalose-6-phosphate synthase (483 aa).

A D-glucose 6-phosphate-binding site is contributed by arginine 22. 42–43 serves as a coordination point for UDP-alpha-D-glucose; the sequence is GG. Residues tyrosine 94 and aspartate 148 each coordinate D-glucose 6-phosphate. UDP-alpha-D-glucose contacts are provided by arginine 290 and lysine 295. Residue arginine 328 coordinates D-glucose 6-phosphate. 393-397 is a UDP-alpha-D-glucose binding site; that stretch reads LVAKE.

Belongs to the glycosyltransferase 20 family. Homotetramer.

It catalyses the reaction ADP-alpha-D-glucose + D-glucose 6-phosphate = alpha,alpha-trehalose 6-phosphate + ADP + H(+). It carries out the reaction CDP-alpha-D-glucose + D-glucose 6-phosphate = alpha,alpha-trehalose 6-phosphate + CDP + H(+). The catalysed reaction is GDP-alpha-D-glucose + D-glucose 6-phosphate = alpha,alpha-trehalose 6-phosphate + GDP + H(+). The enzyme catalyses TDP-alpha-D-glucose + D-glucose 6-phosphate = 5-methyl-UDP + alpha,alpha-trehalose 6-phosphate + H(+). It catalyses the reaction D-glucose 6-phosphate + UDP-alpha-D-glucose = alpha,alpha-trehalose 6-phosphate + UDP + H(+). Its pathway is glycan biosynthesis; trehalose biosynthesis. Its function is as follows. Probably involved in the osmoprotection via the biosynthesis of trehalose and in the production of glycogen and alpha-glucan via the TreS-Pep2 branch involved in the biosynthesis of maltose-1-phosphate (M1P). Catalyzes the transfer of glucose from UDP-glucose (UDP-Glc) to D-glucose 6-phosphate (Glc-6-P) to form trehalose-6-phosphate. Probably also able to use ADP-Glc, CDP-Glc, GDP-Glc and TDP-Glc as glucosyl donors. This Mycobacterium sp. (strain JLS) protein is Trehalose-6-phosphate synthase.